The primary structure comprises 119 residues: MVLTNSKQPRKQRKALYNAPLHLRNSVMSAMLSKALKEKYGKNALPVKKGDTVKVLRGSFKGIEGEVSKVNYSGYKIIVEGVVNKKQDGKETPYPIHPSNVMITKMEDSDEKRFKTSNK.

This sequence belongs to the universal ribosomal protein uL24 family. Part of the 50S ribosomal subunit.

One of two assembly initiator proteins, it binds directly to the 5'-end of the 23S rRNA, where it nucleates assembly of the 50S subunit. Functionally, located at the polypeptide exit tunnel on the outside of the subunit. The chain is Large ribosomal subunit protein uL24 from Methanococcus vannielii.